A 108-amino-acid polypeptide reads, in one-letter code: Replication restart protein PriB (108 aa).

One can recognise an SSB domain in the interval 8–108 (IDNRFSVMGV…LHAEQIEFID (101 aa)).

The protein belongs to the PriB family. As to quaternary structure, homodimer. Interacts with PriA and DnaT. Component of the replication restart primosome. Primosome assembly occurs via a 'hand-off' mechanism. PriA binds to replication forks, subsequently PriB then DnaT bind; DnaT then displaces ssDNA to generate the helicase loading substrate.

Functionally, involved in the restart of stalled replication forks, which reloads the replicative helicase on sites other than the origin of replication; the PriA-PriB pathway is the major replication restart pathway. During primosome assembly it facilitates complex formation between PriA and DnaT on DNA; stabilizes PriA on DNA. Stimulates the DNA unwinding activity of PriA helicase. This Haemophilus influenzae (strain 86-028NP) protein is Replication restart protein PriB.